Consider the following 182-residue polypeptide: Adenine phosphoribosyltransferase (182 aa).

This sequence belongs to the purine/pyrimidine phosphoribosyltransferase family. Homodimer.

Its subcellular location is the cytoplasm. The enzyme catalyses AMP + diphosphate = 5-phospho-alpha-D-ribose 1-diphosphate + adenine. The protein operates within purine metabolism; AMP biosynthesis via salvage pathway; AMP from adenine: step 1/1. Catalyzes a salvage reaction resulting in the formation of AMP, that is energically less costly than de novo synthesis. This chain is Adenine phosphoribosyltransferase, found in Pseudomonas syringae pv. syringae (strain B728a).